The sequence spans 397 residues: Tryptophan synthase beta chain (397 aa).

N6-(pyridoxal phosphate)lysine is present on lysine 90.

The protein belongs to the TrpB family. As to quaternary structure, tetramer of two alpha and two beta chains. It depends on pyridoxal 5'-phosphate as a cofactor.

The catalysed reaction is (1S,2R)-1-C-(indol-3-yl)glycerol 3-phosphate + L-serine = D-glyceraldehyde 3-phosphate + L-tryptophan + H2O. It participates in amino-acid biosynthesis; L-tryptophan biosynthesis; L-tryptophan from chorismate: step 5/5. Its function is as follows. The beta subunit is responsible for the synthesis of L-tryptophan from indole and L-serine. The sequence is that of Tryptophan synthase beta chain from Nitrosomonas europaea (strain ATCC 19718 / CIP 103999 / KCTC 2705 / NBRC 14298).